The primary structure comprises 593 residues: UvrABC system protein C (593 aa).

The region spanning 17 to 94 (MEPGCYLMKD…IKQYQPRYNI (78 aa)) is the GIY-YIG domain. Positions 199 to 234 (KTILKSLEERMLTASESLDFERAKEYRDLIQHIQNL) constitute a UVR domain.

The protein belongs to the UvrC family. As to quaternary structure, interacts with UvrB in an incision complex.

It is found in the cytoplasm. Its function is as follows. The UvrABC repair system catalyzes the recognition and processing of DNA lesions. UvrC both incises the 5' and 3' sides of the lesion. The N-terminal half is responsible for the 3' incision and the C-terminal half is responsible for the 5' incision. This is UvrABC system protein C from Staphylococcus aureus (strain Mu3 / ATCC 700698).